Here is a 681-residue protein sequence, read N- to C-terminus: Transmembrane protein 214-A (681 aa).

Disordered regions lie at residues 1 to 41 (MASG…GTAP) and 58 to 99 (KKQN…GSRQ). Asn300 and Asn324 each carry an N-linked (GlcNAc...) asparagine glycan. Helical transmembrane passes span 471-491 (GFPWRRLIVIAFVFLFGFVFY) and 608-628 (LLLHLHRTYLLPAVTYLEAAV).

It belongs to the TMEM214 family. In terms of assembly, constitutively interacts with CASP4; required for the localization of procaspase 4 to the ER.

It localises to the endoplasmic reticulum membrane. Critical mediator, in cooperation with CASP4, of endoplasmic reticulum-stress induced apoptosis. Required or the activation of CASP4 following endoplasmic reticulum stress. The chain is Transmembrane protein 214-A (tmem214-a) from Xenopus laevis (African clawed frog).